The primary structure comprises 146 residues: Hemoglobin subunit beta (146 aa).

Residues 2–146 (HWSAEEKQLI…VAHALARKYH (145 aa)) form the Globin domain. Residues His63 and His92 each coordinate heme b.

The protein belongs to the globin family. Heterotetramer of two alpha chains and two beta chains. In terms of tissue distribution, red blood cells.

Involved in oxygen transport from the lung to the various peripheral tissues. In Anser anser anser (Western greylag goose), this protein is Hemoglobin subunit beta (HBB).